Here is a 714-residue protein sequence, read N- to C-terminus: Mitochondrial division protein 1 (714 aa).

The stretch at 240-298 (LNIQKNSTLSEIRDIEVEVENLRQKKEKLLGKIANIEQNQLLLEDNLKQIDDRLDFLEE) forms a coiled coil. Residues 323–354 (LKNDAIRNEGVTTESISSEASNLPPRRRQQLR) are disordered. Residues 332 to 343 (GVTTESISSEAS) show a composition bias toward polar residues. Phosphoserine is present on Ser-376. WD repeat units follow at residues 396–436 (THDD…KIGE), 439–478 (GHLATINCMQINRDYGTLVTGGRDAALKLWNLNLAQQLYQ), 500–539 (AHTDEVTALSLDPSFLVSGSQDRTIRQWDLRSGKCLQTID), 561–603 (TQRN…RTLK), 604–642 (GHTDAITSLKFDSACLVTGSYDRTVRIWDLRTGLLNKFH), 644–681 (YSAPVLSLDLFQENAAVVVADEPSVQIYDSEKDESWSC), and 685–714 (GNETSVSTVKYKENYMVEGRENGDVNIWAV).

Belongs to the WD repeat MDV1/CAF4 family. Interacts with CAF4, DNM1 and FIS1, components of the mitochondrial fission machinery. Interacts via its N-terminal, coiled-coil extension (NTE) with FIS1, and via its WD repeats with DNM1.

It is found in the mitochondrion outer membrane. Functionally, involved in mitochondrial fission. Has a partially redundant function to CAF4 in acting as an adapter protein, binding to FIS1 on the mitochondrial outer membrane and recruiting the dynamin-like GTPase DNM1 to form mitochondrial fission complexes. Formation of these complexes is required to promote constriction and fission of the mitochondrial compartment at a late step in mitochondrial division. In Saccharomyces cerevisiae (strain ATCC 204508 / S288c) (Baker's yeast), this protein is Mitochondrial division protein 1 (MDV1).